A 120-amino-acid chain; its full sequence is uncharacterized protein (120 aa).

In terms of domain architecture, HIT spans 7-120; that stretch reads VFAKIITKNL…KLIGLINNND (114 aa). The Histidine triad motif motif lies at 101–105; it reads HFHFH.

This is an uncharacterized protein from Rickettsia prowazekii (strain Madrid E).